The sequence spans 252 residues: Demethylmenaquinone methyltransferase (252 aa).

Residues threonine 64, aspartate 85, and asparagine 112–alanine 113 each bind S-adenosyl-L-methionine.

It belongs to the class I-like SAM-binding methyltransferase superfamily. MenG/UbiE family.

The enzyme catalyses a 2-demethylmenaquinol + S-adenosyl-L-methionine = a menaquinol + S-adenosyl-L-homocysteine + H(+). It participates in quinol/quinone metabolism; menaquinone biosynthesis; menaquinol from 1,4-dihydroxy-2-naphthoate: step 2/2. Its function is as follows. Methyltransferase required for the conversion of demethylmenaquinol (DMKH2) to menaquinol (MKH2). In Lactococcus lactis subsp. lactis (strain IL1403) (Streptococcus lactis), this protein is Demethylmenaquinone methyltransferase.